The following is a 330-amino-acid chain: MSFFTKTAQLVSGAAVAATLFTATAQAETVLRGASMFDEEHAFTKTLRKFEELVDEKYDGDVTFDLRLNGELGVESDYVTFLNQGVAIDYTILAPSNMAKFAPSIPLMDMPFLFRDLDHWNAVLSSDVLAPLEDELLEKADIKIVGYTGGGTRNLLSKQPVVTFDDLKGHKMRVMGAPIQAQIFQALTAAPSAIAYNEVYNAIQTGVIAGFENEAASIQNLKFYEVAPNLTLTRHSITVRPIVMSGKTFNSLPADLQAVVLEAGEEAGAYGRELESREDGVKLQEMVDAGQLTVSEFENRDKMLEMVKPVQDAYAAEIGASDLLEAVRAK.

The first 27 residues, 1 to 27 (MSFFTKTAQLVSGAAVAATLFTATAQA), serve as a signal peptide directing secretion. Residues Glu75, Asn97, Arg153, Arg173, Tyr196, 213-214 (NE), and Arg240 contribute to the alpha-D-mannuronate site. Alpha-D-taluronate is bound by residues Glu75, Asn97, Arg153, Arg173, Tyr196, 213–214 (NE), and Arg240.

The protein belongs to the bacterial solute-binding protein 7 family. As to quaternary structure, the complex is comprised of an extracytoplasmic solute-binding protein and a heteromeric permease formed by two transmembrane proteins.

It localises to the periplasm. Its function is as follows. Solute-binding protein that binds D-mannuronate and D-taluronate (in vitro). Probably part of a tripartite ATP-independent periplasmic (TRAP) transport system that mediates solute transport into the cytoplasm. In Sulfitobacter sp. (strain NAS-14.1), this protein is Solute-binding protein NAS141_03721.